Here is a 287-residue protein sequence, read N- to C-terminus: Large ribosomal subunit protein uL2 (287 aa).

Positions 221–287 are disordered; that stretch reads RGSVMNPCDH…SKRSRGGRDS (67 aa). Basic residues predominate over residues 258-287; that stretch reads KTRKRNKPSNRFVLRKRRRVSKRSRGGRDS.

Belongs to the universal ribosomal protein uL2 family. As to quaternary structure, part of the 50S ribosomal subunit. Forms a bridge to the 30S subunit in the 70S ribosome.

In terms of biological role, one of the primary rRNA binding proteins. Required for association of the 30S and 50S subunits to form the 70S ribosome, for tRNA binding and peptide bond formation. It has been suggested to have peptidyltransferase activity; this is somewhat controversial. Makes several contacts with the 16S rRNA in the 70S ribosome. The polypeptide is Large ribosomal subunit protein uL2 (Prochlorococcus marinus (strain SARG / CCMP1375 / SS120)).